Here is a 495-residue protein sequence, read N- to C-terminus: Sugar phosphate exchanger 3 (495 aa).

The chain crosses the membrane as a helical span at residues 16–36 (FSHHHMVVFLLTFFSYSLLHA). N58 carries N-linked (GlcNAc...) asparagine glycosylation. Helical transmembrane passes span 82–102 (TLFLGMLDTIFLFSYAVGLFI), 114–134 (WVLSFGMCSSALVVFVFGTLT), 148–168 (LWIVNGLLQSTGWPCVVAVMG), 178–198 (VVFGLWSACASVGNILGACLA), and 210–230 (FLVTAAVQFAGGIIIFFGLLV). N267 carries an N-linked (GlcNAc...) asparagine glycan. 6 helical membrane passes run 298-318 (LAYACLKLVNYSFFFWLPFYL), 334-354 (IWYDVGGIIGGTLQGFISDML), 358-378 (APVLALSLLLAIGSLVGYSRS), 387-407 (LLMAVTGFFIGGPSNMISSAI), 429-449 (GIVDGTGSIGAAVGQYLVSLI), and 453-473 (LGWMWVFYFFILMTSCTVLFI).

Belongs to the major facilitator superfamily. Organophosphate:Pi antiporter (OPA) (TC 2.A.1.4) family. In terms of assembly, interacts with ATRAID; the interaction is direct and both proteins are mutually dependent for their stability. In terms of processing, glycosylated.

Its subcellular location is the endoplasmic reticulum membrane. The protein resides in the lysosome membrane. Functionally, unlike the other SLC37 members, lacks glucose-6-phosphate antiporter activity. In osteoclasts, forms a transporter complex with ATRAID for nitrogen-containing-bisphophonates (N-BPs) required for releasing N-BP molecules that have trafficked to lysosomes through fluid-phase endocytosis into the cytosol. The protein is Sugar phosphate exchanger 3 (SLC37A3) of Bos taurus (Bovine).